Reading from the N-terminus, the 427-residue chain is Methylthioribose kinase 2 (427 aa).

Residues 49–53 (DGNLN), K68, and 122–124 (RYI) each bind ATP. Position 51 (N51) interacts with substrate. D243 is a binding site for substrate. Position 260-262 (260-262 (DPE)) interacts with ATP. R370 is a binding site for substrate.

The protein belongs to the methylthioribose kinase family. In terms of assembly, homodimer.

It catalyses the reaction 5-(methylsulfanyl)-D-ribose + ATP = 5-(methylsulfanyl)-alpha-D-ribose 1-phosphate + ADP + H(+). It participates in amino-acid biosynthesis; L-methionine biosynthesis via salvage pathway; S-methyl-5-thio-alpha-D-ribose 1-phosphate from S-methyl-5'-thioadenosine (hydrolase route): step 2/2. Its function is as follows. Catalyzes the phosphorylation of methylthioribose into methylthioribose-1-phosphate. The polypeptide is Methylthioribose kinase 2 (MTK2) (Oryza sativa subsp. japonica (Rice)).